The primary structure comprises 563 residues: Putative GMC-type oxidoreductase L128 (563 aa).

A signal peptide spans M1–S21. FAD is bound at residue D48–R77. H504 (proton acceptor) is an active-site residue.

It belongs to the GMC oxidoreductase family. FAD serves as cofactor.

The sequence is that of Putative GMC-type oxidoreductase L128 from Acanthamoeba polyphaga mimivirus (APMV).